The following is a 308-amino-acid chain: Acetylglutamate kinase (308 aa).

Substrate-binding positions include 86–87, Arg108, and Asn201; that span reads GG.

The protein belongs to the acetylglutamate kinase family. ArgB subfamily.

It is found in the cytoplasm. The enzyme catalyses N-acetyl-L-glutamate + ATP = N-acetyl-L-glutamyl 5-phosphate + ADP. It participates in amino-acid biosynthesis; L-arginine biosynthesis; N(2)-acetyl-L-ornithine from L-glutamate: step 2/4. Functionally, catalyzes the ATP-dependent phosphorylation of N-acetyl-L-glutamate. This is Acetylglutamate kinase from Prochlorococcus marinus (strain MIT 9313).